Consider the following 727-residue polypeptide: Rho-related BTB domain-containing protein 2 (727 aa).

The tract at residues 1 to 210 (MDSDMDYERP…DNAIRAALIS (210 aa)) is rho-like. GTP is bound by residues 21-28 (GDNAVGKT), 84-88 (DTFGD), and 140-143 (CQLD). BTB domains lie at 266–442 (ADVI…DENE) and 500–567 (SDVT…TSSP). The segment at 304 to 333 (ELGGPSEPGGTHPEDHQGHSDQHHHHHHHH) is disordered. Positions 315–324 (HPEDHQGHSD) are enriched in basic and acidic residues. The tract at residues 703 to 727 (FWNSPSSPSSSAASSSSPSSSSAVV) is disordered. The segment covering 706–727 (SPSSPSSSAASSSSPSSSSAVV) has biased composition (low complexity).

Belongs to the small GTPase superfamily. Rho family. Interacts with HSP90AA1 and HSP90AB1. Forms a complex with CUL3 and RBX1. Interacts (via BTB 1 domain) with CUL3. Interacts with MSI2. Autoubiquitinated by RHOBTB2-CUL3-RBX1 ubiquitin ligase complex. In terms of tissue distribution, ubiquitous, with highest levels in neural tissues. Expression is also detected in fetal lung, heart, and brain.

In terms of biological role, regulator of cell proliferation and apoptosis. It likely functions as a substrate-adapter that recruits key substrates, e.g. MSI2, to CUL3-based ubiquitin ligase complexes for degradation. Required for MSI2 ubiquitination and degradation. This is Rho-related BTB domain-containing protein 2 (RHOBTB2) from Homo sapiens (Human).